Here is a 335-residue protein sequence, read N- to C-terminus: Heme A synthase (335 aa).

8 helical membrane-spanning segments follow: residues 9–29 (VAIW…IGGF), 90–110 (YVHR…FIYF), 120–140 (VVIR…TGWY), 156–176 (MLTL…YQFF), 197–217 (VGII…VAGL), 255–275 (VQFI…VLTI), 283–303 (VYVM…TLLL), and 309–329 (IAIS…CFLC). H259 is a binding site for heme. H313 serves as a coordination point for heme.

It belongs to the COX15/CtaA family. Type 2 subfamily. As to quaternary structure, interacts with CtaB. Heme b is required as a cofactor.

Its subcellular location is the cell membrane. The catalysed reaction is Fe(II)-heme o + 2 A + H2O = Fe(II)-heme a + 2 AH2. The protein operates within porphyrin-containing compound metabolism; heme A biosynthesis; heme A from heme O: step 1/1. In terms of biological role, catalyzes the conversion of heme O to heme A by two successive hydroxylations of the methyl group at C8. The first hydroxylation forms heme I, the second hydroxylation results in an unstable dihydroxymethyl group, which spontaneously dehydrates, resulting in the formyl group of heme A. The polypeptide is Heme A synthase (Wolbachia sp. subsp. Brugia malayi (strain TRS)).